Consider the following 300-residue polypeptide: Fe(3+) dicitrate-binding periplasmic protein FecB (300 aa).

Positions 1–21 (MLAFIRFLFAGLLLVISHAFA) are cleaved as a signal peptide. The Fe/B12 periplasmic-binding domain maps to 39 to 295 (RIVVLELSFA…DTVKIFHHQP (257 aa)).

The protein belongs to the bacterial solute-binding protein 8 family. As to quaternary structure, the complex is composed of two ATP-binding proteins (FecE), two transmembrane proteins (FecC and FecD) and a solute-binding protein (FecB). Interacts with FecC and FecD.

It is found in the periplasm. Part of the ABC transporter complex FecBCDE involved in citrate-dependent Fe(3+) uptake. Binds both iron-free and iron-loaded citrate although it binds iron-loaded citrate with a higher affinity. Binds different forms of Fe(3+)-citrate as well as citrate complexed with various representative Fe(3+)-mimics (Ga(3+), Al(3+), Sc(3+) and In(3+)) and a representative divalent metal ion (Mg(2+)). Can also bind various tricarboxylates in iron-free and iron-loaded form. The sequence is that of Fe(3+) dicitrate-binding periplasmic protein FecB from Escherichia coli (strain K12).